The chain runs to 443 residues: Xaa-Pro dipeptidase (443 aa).

Mn(2+)-binding residues include Asp246, Asp257, His339, Glu384, and Glu423.

This sequence belongs to the peptidase M24B family. Bacterial-type prolidase subfamily. The cofactor is Mn(2+).

The catalysed reaction is Xaa-L-Pro dipeptide + H2O = an L-alpha-amino acid + L-proline. Functionally, splits dipeptides with a prolyl residue in the C-terminal position. This chain is Xaa-Pro dipeptidase, found in Klebsiella pneumoniae subsp. pneumoniae (strain ATCC 700721 / MGH 78578).